The chain runs to 417 residues: Guanine nucleotide-exchange factor SEC12 (417 aa).

Residues 1-388 (MGRRRGVELY…QLHLLPSRRS (388 aa)) lie on the Cytoplasmic side of the membrane. At Tyr-10 the chain carries 3'-nitrotyrosine. Positions 101–135 (KGSKAEKSGSKEQGPRQRKGAAPAEKKSGAEVHPE) are disordered. 2 stretches are compositionally biased toward basic and acidic residues: residues 103–115 (SKAEKSGSKEQGP) and 124–135 (AEKKSGAEVHPE). WD repeat units lie at residues 152 to 191 (STEPLQKVVCFNHDNTLLATGGSDGHVRVWKVPSLEKVLE), 194 to 232 (AHEGEIGDLALGPDGKLVTVGWDFKASVWQKDQLVTQLQ), and 298 to 337 (CGHEVISCLTVSESGTFLGLGTVTGSVAIYIAFSLQRLYY). The chain crosses the membrane as a helical span at residues 389–409 (VPVWLLLLLCVGLIIVTILLL). Topologically, residues 410–417 (QSAFPGFL) are lumenal.

In terms of assembly, interacts with SAR1B (GDP-bound form). Interacts with MIA2; recruits PREB to endoplasmic reticulum exit sites. Interacts with CIDEB; facilitating loading of SCAP-SREBP into COPII vesicles.

It is found in the endoplasmic reticulum membrane. It localises to the nucleus. In terms of biological role, guanine nucleotide exchange factor (GEF) that regulates the assembly of the coat protein complex II/COPII in endoplasmic reticulum (ER) to Golgi vesicle-mediated transport. Selectively activates SAR1A and SAR1B by promoting the exchange of guanosine diphosphate (GDP) for guanosine triphosphate (GTP) in these small GTPases. In their activated GTP-bound state, SAR1A and SAR1B insert into the membrane of the endoplasmic reticulum where they recruit the remainder of the coat protein complex II/COPII which is responsible for both the sorting of proteins and the deformation and budding of membranes into vesicles destined to the Golgi. Its function is as follows. Was first identified based on its probable role in the regulation of pituitary gene transcription. Binds to the prolactin gene (PRL) promoter and seems to activate transcription. This Rattus norvegicus (Rat) protein is Guanine nucleotide-exchange factor SEC12.